The chain runs to 342 residues: Ribosomal RNA small subunit methyltransferase C (342 aa).

The protein belongs to the methyltransferase superfamily. RsmC family. As to quaternary structure, monomer.

The protein resides in the cytoplasm. It catalyses the reaction guanosine(1207) in 16S rRNA + S-adenosyl-L-methionine = N(2)-methylguanosine(1207) in 16S rRNA + S-adenosyl-L-homocysteine + H(+). In terms of biological role, specifically methylates the guanine in position 1207 of 16S rRNA in the 30S particle. The protein is Ribosomal RNA small subunit methyltransferase C of Hahella chejuensis (strain KCTC 2396).